A 555-amino-acid polypeptide reads, in one-letter code: Putative protein NRT1/ PTR FAMILY 2.14 (555 aa).

The next 12 helical transmembrane spans lie at 62–82, 93–113, 135–155, 181–201, 209–229, 234–254, 319–339, 363–383, 405–425, 441–461, 480–500, and 523–543; these read VTLINTWSALTNFAPIIGAFI, IVFGSIAELLGMLVLTFTSLV, YSQLYVLLSGLFLLSVGTGGI, FFSWYYTTHTIVQLVSMTLVL, WGIGFAIPTVLNFFALLLLFV, YVFVKPEGSVFSGVFKVLVAA, IKSIISIIPIFASSIIGFLAM, LIPPASITVISLLNIGIWLPF, LQKVGIGNIFSISTMLISGIV, VFWLTPQQVLMGFYQVFTIVG, SLLYLGLSLASYLSSAMVSIV, and CFYYFIAALSTLNFIFFFWCA.

This sequence belongs to the major facilitator superfamily. Proton-dependent oligopeptide transporter (POT/PTR) (TC 2.A.17) family. Not detected.

The protein resides in the membrane. In Arabidopsis thaliana (Mouse-ear cress), this protein is Putative protein NRT1/ PTR FAMILY 2.14 (NPF2.14).